The sequence spans 172 residues: Signal peptidase complex catalytic subunit SEC11 (172 aa).

At 1–15 (MVNFGAQSIRQTLVQ) the chain is on the cytoplasmic side. The helical; Signal-anchor for type II membrane protein transmembrane segment at 16-36 (LLGFAAIFTSSYMFYKGLSIV) threads the bilayer. At 37 to 172 (ANSESPLVVV…TGLLAFIQGE (136 aa)) the chain is on the lumenal side. Active-site charge relay system residues include S50, H89, and D114. Residues 158–169 (GLLGITGLLAFI) are C-terminal short (CTS) helix.

The protein belongs to the peptidase S26B family. As to quaternary structure, component of the signal peptidase complex (SPC) composed of a catalytic subunit SEC11 and three accessory subunits SPC1, SPC2 and SPC3. The complex induces a local thinning of the ER membrane which is used to measure the length of the signal peptide (SP) h-region of protein substrates. This ensures the selectivity of the complex towards h-regions shorter than 18-20 amino acids. SPC associates with the translocon complex.

The protein resides in the endoplasmic reticulum membrane. The enzyme catalyses Cleavage of hydrophobic, N-terminal signal or leader sequences from secreted and periplasmic proteins.. Functionally, catalytic component of the signal peptidase complex (SPC) which catalyzes the cleavage of N-terminal signal sequences from nascent proteins as they are translocated into the lumen of the endoplasmic reticulum. Specifically cleaves N-terminal signal peptides that contain a hydrophobic alpha-helix (h-region) shorter than 18-20 amino acids. The protein is Signal peptidase complex catalytic subunit SEC11 (SEC11) of Yarrowia lipolytica (strain CLIB 122 / E 150) (Yeast).